The chain runs to 238 residues: MRPADRAAQQVRPLTLTRNYTKHAEGSVLVEFGDTKVLCTATVEEGVPRFLKGQGQGWITAEYGMLPRSTHSRNAREAAKGKQGGRTLEIQRLIARSLRAAVDLKKLGEFTITLDCDVLQADGGTRTASISGACVALADALNKLVASGKLKANPMKGLVAAVSVGIVKGEALCDLEYVEDSAAETDMNVVMMEDGRMIEVQGTAEGEPFSHEELLTLLALARGGIETIFQAQKAALEQ.

Residues Arg86 and 124–126 (GTR) contribute to the phosphate site.

It belongs to the RNase PH family. Homohexameric ring arranged as a trimer of dimers.

It catalyses the reaction tRNA(n+1) + phosphate = tRNA(n) + a ribonucleoside 5'-diphosphate. Functionally, phosphorolytic 3'-5' exoribonuclease that plays an important role in tRNA 3'-end maturation. Removes nucleotide residues following the 3'-CCA terminus of tRNAs; can also add nucleotides to the ends of RNA molecules by using nucleoside diphosphates as substrates, but this may not be physiologically important. Probably plays a role in initiation of 16S rRNA degradation (leading to ribosome degradation) during starvation. The chain is Ribonuclease PH from Yersinia enterocolitica serotype O:8 / biotype 1B (strain NCTC 13174 / 8081).